The sequence spans 191 residues: Leucyl/phenylalanyl-tRNA--protein transferase (191 aa).

It belongs to the L/F-transferase family.

It localises to the cytoplasm. The catalysed reaction is N-terminal L-lysyl-[protein] + L-leucyl-tRNA(Leu) = N-terminal L-leucyl-L-lysyl-[protein] + tRNA(Leu) + H(+). The enzyme catalyses N-terminal L-arginyl-[protein] + L-leucyl-tRNA(Leu) = N-terminal L-leucyl-L-arginyl-[protein] + tRNA(Leu) + H(+). It carries out the reaction L-phenylalanyl-tRNA(Phe) + an N-terminal L-alpha-aminoacyl-[protein] = an N-terminal L-phenylalanyl-L-alpha-aminoacyl-[protein] + tRNA(Phe). Functionally, functions in the N-end rule pathway of protein degradation where it conjugates Leu, Phe and, less efficiently, Met from aminoacyl-tRNAs to the N-termini of proteins containing an N-terminal arginine or lysine. This Gloeothece citriformis (strain PCC 7424) (Cyanothece sp. (strain PCC 7424)) protein is Leucyl/phenylalanyl-tRNA--protein transferase.